The primary structure comprises 581 residues: Frizzled-3 (581 aa).

The first 19 residues, 1-19 (MYAASILILHLTWAVATIA), serve as a signal peptide directing secretion. Topologically, residues 20-237 (ANGAGHNGPV…TSSQKKTSET (218 aa)) are extracellular. The 122-residue stretch at 35–156 (PNGLQCQPIA…PEKHELCMQI (122 aa)) folds into the FZ domain. 5 disulfide bridges follow: Cys40/Cys101, Cys48/Cys94, Cys85/Cys123, Cys112/Cys153, and Cys116/Cys141. Asn54 is a glycosylation site (N-linked (GlcNAc...) asparagine). Residue Asn206 is glycosylated (N-linked (GlcNAc...) asparagine). Residues 238 to 258 (LILGLSAVCFVLTLFALVTFW) traverse the membrane as a helical segment. Residues 259–270 (AEPTRFGYPERP) are Cytoplasmic-facing. Residues 271 to 291 (VLFLCLCYNLFSVCYLERIVF) traverse the membrane as a helical segment. Residues 292–321 (HNQARMHDVELQGRLMRPGCLLTPPCLASY) lie on the Extracellular side of the membrane. The chain crosses the membrane as a helical span at residues 322–342 (ITTSYLSLCAASWWLIFALCF). Residues 343–359 (YLSSHKKWSSEALEKRS) lie on the Cytoplasmic side of the membrane. Residues 360 to 380 (GLFHVLAWVPPLAPPIAALLL) traverse the membrane as a helical segment. Topologically, residues 381–393 (EKVRPSELTGMCY) are extracellular. Residues 394-414 (APGFVELPALVLLLLGLYFTL) form a helical membrane-spanning segment. At 415–442 (RASRSLLSLQQQLQPTLAHHRFGQIRKR) the chain is on the cytoplasmic side. A helical membrane pass occupies residues 443-463 (FVLFSLLYFAPTTAGVVAALC). Topologically, residues 464-488 (ERYADSVPSCSTPDDCLSPTPLSAW) are extracellular. Residues 489–509 (PALVRIFFQLVGGTLTGLWVW) form a helical membrane-spanning segment. Residues 510 to 581 (SRKTCESYRN…PVYNPNQSRV (72 aa)) lie on the Cytoplasmic side of the membrane. Residues 579 to 581 (SRV) carry the PDZ-binding motif.

This sequence belongs to the G-protein coupled receptor Fz/Smo family. As to expression, wing, leg and eye imaginal disks. In embryos, expressed is seen in brain, proventriculus, Malpighian tubules, anal plate and visceral mesoderm of parasegment 8.

The protein localises to the membrane. Its function is as follows. Receptor for Wnt proteins. Most of frizzled receptors are coupled to the beta-catenin canonical signaling pathway, which leads to the activation of disheveled proteins, inhibition of GSK-3 kinase, nuclear accumulation of beta-catenin and activation of Wnt target genes. A second signaling pathway involving PKC and calcium fluxes has been seen for some family members, but it is not yet clear if it represents a distinct pathway or if it can be integrated in the canonical pathway, as PKC seems to be required for Wnt-mediated inactivation of GSK-3 kinase. Both pathways seem to involve interactions with G-proteins. Required to coordinate the cytoskeletons of epidermal cells to produce a parallel array of cuticular hairs and bristles. The polypeptide is Frizzled-3 (fz3) (Drosophila melanogaster (Fruit fly)).